The sequence spans 88 residues: Small ribosomal subunit protein bS18A (88 aa).

Belongs to the bacterial ribosomal protein bS18 family. In terms of assembly, part of the 30S ribosomal subunit. Forms a tight heterodimer with protein bS6.

Binds as a heterodimer with protein bS6 to the central domain of the 16S rRNA, where it helps stabilize the platform of the 30S subunit. This chain is Small ribosomal subunit protein bS18A, found in Roseiflexus sp. (strain RS-1).